The following is a 188-amino-acid chain: Elongation factor P (188 aa).

The residue at position 34 (Lys34) is an N6-(3,6-diaminohexanoyl)-5-hydroxylysine.

This sequence belongs to the elongation factor P family. Post-translationally, may be beta-lysylated on the epsilon-amino group of Lys-34 by the combined action of EpmA and EpmB, and then hydroxylated on the C5 position of the same residue by EpmC (if this protein is present). Lysylation is critical for the stimulatory effect of EF-P on peptide-bond formation. The lysylation moiety may extend toward the peptidyltransferase center and stabilize the terminal 3-CCA end of the tRNA. Hydroxylation of the C5 position on Lys-34 may allow additional potential stabilizing hydrogen-bond interactions with the P-tRNA.

It is found in the cytoplasm. It functions in the pathway protein biosynthesis; polypeptide chain elongation. Its function is as follows. Involved in peptide bond synthesis. Alleviates ribosome stalling that occurs when 3 or more consecutive Pro residues or the sequence PPG is present in a protein, possibly by augmenting the peptidyl transferase activity of the ribosome. Modification of Lys-34 is required for alleviation. This Citrobacter koseri (strain ATCC BAA-895 / CDC 4225-83 / SGSC4696) protein is Elongation factor P.